Here is a 111-residue protein sequence, read N- to C-terminus: Carboxysome shell protein CcmK1 (111 aa).

Residues 4 to 90 (AVGMIETLGF…PHENLEYVLP (87 aa)) enclose the BMC domain.

Belongs to the bacterial microcompartments protein family. CcmK subfamily. As to quaternary structure, homohexamer. Interacts with full-length CcmM. Forms mixed heterohexamers of all possible stoichiometries with CcmK2, which might form dodecamers. Only very weak interactions with CcmK3 and CcmK4 were seen. Interacts with CcmN and CcmO in the carboxysome.

Its subcellular location is the carboxysome. One of the shell proteins of the carboxysome, a polyhedral inclusion where RuBisCO (ribulose bisphosphate carboxylase, rbcL-rbcS) is sequestered. Assembles into hexamers which make sheets that form the facets of the polyhedral carboxysome. The hexamer central pore probably regulates metabolite flux. Its function is as follows. Probably the major shell protein of the carboxysome, a polyhedral inclusion where RuBisCO (ribulose bisphosphate carboxylase, rbcL-rbcS) is sequestered. The central pore probably regulates metabolite flux. Hexamers make sheets that form the facets of the carboxysome. This chain is Carboxysome shell protein CcmK1, found in Synechocystis sp. (strain ATCC 27184 / PCC 6803 / Kazusa).